The chain runs to 529 residues: Bifunctional purine biosynthesis protein PurH (529 aa).

The MGS-like domain occupies 2-149 (TNLVPVGRAL…KNHRFVNVVT (148 aa)).

Belongs to the PurH family.

The catalysed reaction is (6R)-10-formyltetrahydrofolate + 5-amino-1-(5-phospho-beta-D-ribosyl)imidazole-4-carboxamide = 5-formamido-1-(5-phospho-D-ribosyl)imidazole-4-carboxamide + (6S)-5,6,7,8-tetrahydrofolate. It carries out the reaction IMP + H2O = 5-formamido-1-(5-phospho-D-ribosyl)imidazole-4-carboxamide. It functions in the pathway purine metabolism; IMP biosynthesis via de novo pathway; 5-formamido-1-(5-phospho-D-ribosyl)imidazole-4-carboxamide from 5-amino-1-(5-phospho-D-ribosyl)imidazole-4-carboxamide (10-formyl THF route): step 1/1. It participates in purine metabolism; IMP biosynthesis via de novo pathway; IMP from 5-formamido-1-(5-phospho-D-ribosyl)imidazole-4-carboxamide: step 1/1. The chain is Bifunctional purine biosynthesis protein PurH from Cereibacter sphaeroides (strain ATCC 17025 / ATH 2.4.3) (Rhodobacter sphaeroides).